Reading from the N-terminus, the 383-residue chain is Probable butyrate kinase (383 aa).

This sequence belongs to the acetokinase family.

The protein localises to the cytoplasm. It catalyses the reaction butanoate + ATP = butanoyl phosphate + ADP. The protein is Probable butyrate kinase of Deinococcus radiodurans (strain ATCC 13939 / DSM 20539 / JCM 16871 / CCUG 27074 / LMG 4051 / NBRC 15346 / NCIMB 9279 / VKM B-1422 / R1).